A 237-amino-acid polypeptide reads, in one-letter code: Uridylate kinase (237 aa).

Residue 12–15 (KLSG) participates in ATP binding. The involved in allosteric activation by GTP stretch occupies residues 20–25 (GAEGFG). Residue G54 participates in UMP binding. ATP-binding residues include G55 and R59. Residues D74 and 135-142 (TGSPFFTT) each bind UMP. ATP contacts are provided by T162, Y168, and D171.

This sequence belongs to the UMP kinase family. In terms of assembly, homohexamer.

The protein localises to the cytoplasm. It catalyses the reaction UMP + ATP = UDP + ADP. It functions in the pathway pyrimidine metabolism; CTP biosynthesis via de novo pathway; UDP from UMP (UMPK route): step 1/1. Allosterically activated by GTP. Inhibited by UTP. In terms of biological role, catalyzes the reversible phosphorylation of UMP to UDP. This Actinobacillus succinogenes (strain ATCC 55618 / DSM 22257 / CCUG 43843 / 130Z) protein is Uridylate kinase.